Consider the following 481-residue polypeptide: UDP-glycosyltransferase 88F4 (481 aa).

UDP-alpha-D-glucose contacts are provided by residues Ser288, 357–358 (WA), 375–383 (HCGWNSVLE), and 397–400 (YAEQ).

Belongs to the UDP-glycosyltransferase family.

Functionally, glycosyltransferase that may possess chalcone and dihydrochalcone 2'-O-glucosyltransferase activity. The polypeptide is UDP-glycosyltransferase 88F4 (Malus domestica (Apple)).